Consider the following 309-residue polypeptide: Protease HtpX homolog (309 aa).

A run of 2 helical transmembrane segments spans residues Thr-7–Gly-27 and Gln-29–Ser-49. Position 131 (His-131) interacts with Zn(2+). Glu-132 is an active-site residue. A Zn(2+)-binding site is contributed by His-135. Helical transmembrane passes span Ile-141 to Ala-161 and Ile-182 to Ile-202. Residue Glu-207 participates in Zn(2+) binding. The interval Arg-278 to Arg-309 is disordered.

The protein belongs to the peptidase M48B family. The cofactor is Zn(2+).

The protein resides in the cell inner membrane. In Desulforapulum autotrophicum (strain ATCC 43914 / DSM 3382 / VKM B-1955 / HRM2) (Desulfobacterium autotrophicum), this protein is Protease HtpX homolog.